We begin with the raw amino-acid sequence, 612 residues long: MGVEVVNSGGFEVAPAPFEGKPEKNGKLDQGKGDDAPINFGSVGELPKNAEENNNKVVNSDAPKNAAEEWPVAKQIHSFYLVKYRSYADPKIKAKLDLADKELEKLNKARTGVLDKLRAKRAERSELFDLLDPLKSERKGFNTMFDEKRKEMEPLQQALGKLRSNDGGSARGPAICSSEEELNSMIYSYQYRIQHESIPLTEEKQILKEIRLLEGTRDKVIANAAMRAKIKESMGQKDDIQGQVKLMGAGLDGVKKERQAISARINELSEKLKATKDEITVLENELKTVSEKRDKAYSNIHDLRRQRDETNSEYYQNRTVLNKARDLAAQKNISELEALANAEVEKFISLWCSKKNFREDYEKRILQSLDSRQLSRDGRMRNPDEKPLIAPEAAPSKATPSETEVVPKAKAKPQPKEEPVSAPKPDATVAQNTEKAKDAVKVKNVADDDDDEVYGLGKPQKEEKPVDAATAKEMRKQEEIAKAKQAMERKKKLAEKAAAKAAIRAQKEAEKKEKKEQEKKAKKKTGGNTETETEEVPEASEEEIEAPVQEEKPQKEKVFKEKPIRNRTRGRGPETIPRAILKRKKSTNYWVYAAPAALVVLLLLVLGYYYVL.

Residues 1–58 (MGVEVVNSGGFEVAPAPFEGKPEKNGKLDQGKGDDAPINFGSVGELPKNAEENNNKVV) form a disordered region. The segment covering 20-35 (GKPEKNGKLDQGKGDD) has biased composition (basic and acidic residues). Coiled coils occupy residues 90-113 (PKIK…RTGV) and 251-314 (LDGV…NSEY). 4 stretches are compositionally biased toward basic and acidic residues: residues 374–387 (LSRD…DEKP), 434–446 (EKAK…KNVA), 459–498 (PQKE…EKAA), and 505–519 (AQKE…EQEK). The interval 374–572 (LSRDGRMRNP…PIRNRTRGRG (199 aa)) is disordered. A coiled-coil region spans residues 466–526 (VDAATAKEMR…QEKKAKKKTG (61 aa)). Positions 531-545 (TETEEVPEASEEEIE) are enriched in acidic residues. Phosphoserine is present on S540. A compositionally biased stretch (basic and acidic residues) spans 549 to 564 (QEEKPQKEKVFKEKPI). The helical transmembrane segment at 591-611 (VYAAPAALVVLLLLVLGYYYV) threads the bilayer.

The protein belongs to the plant Proton pump-interactor protein family. In terms of assembly, interacts with AHA1 via N-terminal region. Strongly expressed in root and shoot vascular systems, particularly in meristematic and sink tissues. Also present in pollen, stigmas and siliques, but not in developing embryos.

The protein localises to the cell membrane. Its subcellular location is the endoplasmic reticulum membrane. Its function is as follows. Promotes AHA1 plasma membrane ATPase activity by binding to a site different from the 14-3-3 binding site. The protein is Proton pump-interactor 1 (PPI1) of Arabidopsis thaliana (Mouse-ear cress).